The chain runs to 183 residues: ATP-dependent protease subunit HslV (183 aa).

The active site involves threonine 13. Residues glycine 168, cysteine 171, and threonine 174 each contribute to the Na(+) site.

It belongs to the peptidase T1B family. HslV subfamily. A double ring-shaped homohexamer of HslV is capped on each side by a ring-shaped HslU homohexamer. The assembly of the HslU/HslV complex is dependent on binding of ATP.

The protein localises to the cytoplasm. It carries out the reaction ATP-dependent cleavage of peptide bonds with broad specificity.. With respect to regulation, allosterically activated by HslU binding. Protease subunit of a proteasome-like degradation complex believed to be a general protein degrading machinery. This Xylella fastidiosa (strain M23) protein is ATP-dependent protease subunit HslV.